A 267-amino-acid chain; its full sequence is MQSRTTPGAMLTAMREKPPLVQCITNYVAMNIAANVLLAAGASPAMVHAAEEADEFAGIASALTVNIGTLSTQWIDGMQAAAKATTAAGKPWVLDPVAHYATAFRRDAVAGLLALKPTIIRGNASEIIALAGGESRGQGVDSRDPVEQAEGSARWLAERQQAIVAVTGAVDFVTDGERAVRITGGSALMPQVTALGCSLTCLVGAFAATAPEDLFGATVAALATFAIAGEEAALGAAGPGSFAWRFLDALHALDAETLDARARISAA.

Residue methionine 46 coordinates substrate. Residues arginine 121 and threonine 167 each coordinate ATP. Alanine 194 contacts substrate.

This sequence belongs to the Thz kinase family. Mg(2+) serves as cofactor.

The catalysed reaction is 5-(2-hydroxyethyl)-4-methylthiazole + ATP = 4-methyl-5-(2-phosphooxyethyl)-thiazole + ADP + H(+). Its pathway is cofactor biosynthesis; thiamine diphosphate biosynthesis; 4-methyl-5-(2-phosphoethyl)-thiazole from 5-(2-hydroxyethyl)-4-methylthiazole: step 1/1. Its function is as follows. Catalyzes the phosphorylation of the hydroxyl group of 4-methyl-5-beta-hydroxyethylthiazole (THZ). The chain is Hydroxyethylthiazole kinase from Rhizobium leguminosarum bv. trifolii (strain WSM2304).